The following is a 736-amino-acid chain: MSAPEPKITPELIASHGLKPDEYQRILDLIGREPTFTELGIFSAMWNEHCSYKSSRIHLKGLPTKAPWVLQGPGENAGVIDIGDNQAVVFKMESHNHPSYIEPYQGATTGVGGILRDVFTMGARPIACLNALSFGDPSHPKTRHLVSGVVAGVGGYGNSFGVPTVGGQTRFHTRYDGNILVNAMAVGLADADKIFLAAASGVGMPIVYLGSKTGRDGMGGATMASAEFDEGSDEKRPTVQVGDPFAEKLLLEACLEIMAKDCVIAIQDMGAAGLTCSAVEMGAKGDLGVELDLDAVPTRETGMTAYEMMLSESQERMLMVLKPEKEKEAEEIFKKWGLDFAIVGYTTPTKRFVVKHGGQVKADLPIKELGDEAPLYDRPWVESERLPVIHARDINAPMGAAEALEKLLATPDLCSKRWVWEQYDHVIGGNTVQRPGGDAAVVRIEDGPKGLALTVDVTPRYCEADPFEGGKQAVAEAYRNITAVGGKPLAITDNLNFGNPERPEIMGQLVGCLKGISEACIALDSPIVSGNVSLYNETSGRGILPTPSIGGVGVLDDFTKSATLAFKAEGEAILLIGETKGWLGQSVYLREICGREEGAPPPVDLAVEKRHGDVVRGMIHAGTATAVHDVSDGGLLVAIAEMAIAGNIGASLDAPPGETVSHAWWFGEDQARYVVTVKEADLLAVKTKLKTIGVPCTQIGVTGGHALKIEGERTVDLKALRHAHEHWLPDYMGGKN.

Residue H49 is part of the active site. Residues Y52 and K91 each coordinate ATP. E93 contacts Mg(2+). Substrate-binding positions include 94–97 (SHNH) and R116. H95 serves as the catalytic Proton acceptor. A Mg(2+)-binding site is contributed by D117. Position 240 (Q240) interacts with substrate. D268 contacts Mg(2+). Substrate is bound at residue 312 to 314 (ESQ). The ATP site is built by D493 and G530. Mg(2+) is bound at residue N531. S533 is a binding site for substrate.

Belongs to the FGAMS family. Monomer. Part of the FGAM synthase complex composed of 1 PurL, 1 PurQ and 2 PurS subunits.

Its subcellular location is the cytoplasm. The enzyme catalyses N(2)-formyl-N(1)-(5-phospho-beta-D-ribosyl)glycinamide + L-glutamine + ATP + H2O = 2-formamido-N(1)-(5-O-phospho-beta-D-ribosyl)acetamidine + L-glutamate + ADP + phosphate + H(+). It participates in purine metabolism; IMP biosynthesis via de novo pathway; 5-amino-1-(5-phospho-D-ribosyl)imidazole from N(2)-formyl-N(1)-(5-phospho-D-ribosyl)glycinamide: step 1/2. In terms of biological role, part of the phosphoribosylformylglycinamidine synthase complex involved in the purines biosynthetic pathway. Catalyzes the ATP-dependent conversion of formylglycinamide ribonucleotide (FGAR) and glutamine to yield formylglycinamidine ribonucleotide (FGAM) and glutamate. The FGAM synthase complex is composed of three subunits. PurQ produces an ammonia molecule by converting glutamine to glutamate. PurL transfers the ammonia molecule to FGAR to form FGAM in an ATP-dependent manner. PurS interacts with PurQ and PurL and is thought to assist in the transfer of the ammonia molecule from PurQ to PurL. The protein is Phosphoribosylformylglycinamidine synthase subunit PurL of Rhodopseudomonas palustris (strain ATCC BAA-98 / CGA009).